Consider the following 142-residue polypeptide: Peptide methionine sulfoxide reductase MsrB (142 aa).

Residues 3–126 (KEKLKKKLSL…NSAALRFVPF (124 aa)) form the MsrB domain. Cys-115 (nucleophile) is an active-site residue.

The protein belongs to the MsrB Met sulfoxide reductase family.

It carries out the reaction L-methionyl-[protein] + [thioredoxin]-disulfide + H2O = L-methionyl-(R)-S-oxide-[protein] + [thioredoxin]-dithiol. In Lactococcus lactis subsp. lactis (strain IL1403) (Streptococcus lactis), this protein is Peptide methionine sulfoxide reductase MsrB.